The primary structure comprises 179 residues: Inner membrane-spanning protein YciB (179 aa).

Transmembrane regions (helical) follow at residues 11–31, 52–69, 71–91, 121–141, and 149–169; these read ILFF…TLII, LIMG…AYFN, LEFL…ILLV, LGWA…SQYL, and FKTF…GVYI.

The protein belongs to the YciB family.

The protein localises to the cell inner membrane. Functionally, plays a role in cell envelope biogenesis, maintenance of cell envelope integrity and membrane homeostasis. This is Inner membrane-spanning protein YciB from Histophilus somni (strain 129Pt) (Haemophilus somnus).